We begin with the raw amino-acid sequence, 113 residues long: Guanylate cyclase activator 2B (113 aa).

Residues 1 to 27 (MASRAAAGLLLCGVALVFLVLLQGTQS) form the signal peptide. The propeptide occupies 28–97 (VYIQYQGFRV…SIFQALRTIA (70 aa)). 3 disulfides stabilise this stretch: Cys68/Cys81, Cys101/Cys109, and Cys104/Cys112.

It belongs to the guanylin family.

The protein resides in the secreted. Its function is as follows. Endogenous activator of intestinal guanylate cyclase. It stimulates this enzyme through the same receptor binding region as the heat-stable enterotoxins. May be a potent physiological regulator of intestinal fluid and electrolyte transport. May be an autocrine/paracrine regulator of intestinal salt and water transport. This is Guanylate cyclase activator 2B (GUCA2B) from Sus scrofa (Pig).